Consider the following 188-residue polypeptide: MLQLQPSAVATTIQQGGVIAYPTEAVFGLGCDPDNDSAIEKLLVVKQRPWQKGLILVASSFEQLLPYLDITQLTEQQLQFAQSKWPGPFTFVMPIQSHVSKLLCGEFDSIAVRVSAHPVVRELCDTLNKPLVSTSANLAGEQPVVDAQHIITDFSDKIDALILGKLGEQRQPSTIIDARSGQILRNGS.

Residues 3–188 (QLQPSAVATT…RSGQILRNGS (186 aa)) form the YrdC-like domain.

Belongs to the SUA5 family. TsaC subfamily.

Its subcellular location is the cytoplasm. It catalyses the reaction L-threonine + hydrogencarbonate + ATP = L-threonylcarbamoyladenylate + diphosphate + H2O. In terms of biological role, required for the formation of a threonylcarbamoyl group on adenosine at position 37 (t(6)A37) in tRNAs that read codons beginning with adenine. Catalyzes the conversion of L-threonine, HCO(3)(-)/CO(2) and ATP to give threonylcarbamoyl-AMP (TC-AMP) as the acyladenylate intermediate, with the release of diphosphate. The sequence is that of Threonylcarbamoyl-AMP synthase from Shewanella frigidimarina (strain NCIMB 400).